Consider the following 489-residue polypeptide: Glutamyl-tRNA(Gln) amidotransferase subunit A (489 aa).

Catalysis depends on charge relay system residues Lys-77 and Ser-152. Ser-176 (acyl-ester intermediate) is an active-site residue.

This sequence belongs to the amidase family. GatA subfamily. Heterotrimer of A, B and C subunits.

It catalyses the reaction L-glutamyl-tRNA(Gln) + L-glutamine + ATP + H2O = L-glutaminyl-tRNA(Gln) + L-glutamate + ADP + phosphate + H(+). Functionally, allows the formation of correctly charged Gln-tRNA(Gln) through the transamidation of misacylated Glu-tRNA(Gln) in organisms which lack glutaminyl-tRNA synthetase. The reaction takes place in the presence of glutamine and ATP through an activated gamma-phospho-Glu-tRNA(Gln). In Levilactobacillus brevis (strain ATCC 367 / BCRC 12310 / CIP 105137 / JCM 1170 / LMG 11437 / NCIMB 947 / NCTC 947) (Lactobacillus brevis), this protein is Glutamyl-tRNA(Gln) amidotransferase subunit A.